The chain runs to 89 residues: Small ribosomal subunit protein uS15 (89 aa).

Residues 1–22 form a disordered region; the sequence is MALEKEEKSQIINNYQLHETDT. Residues 10–22 show a composition bias toward polar residues; the sequence is QIINNYQLHETDT.

The protein belongs to the universal ribosomal protein uS15 family. In terms of assembly, part of the 30S ribosomal subunit. Forms a bridge to the 50S subunit in the 70S ribosome, contacting the 23S rRNA.

Its function is as follows. One of the primary rRNA binding proteins, it binds directly to 16S rRNA where it helps nucleate assembly of the platform of the 30S subunit by binding and bridging several RNA helices of the 16S rRNA. In terms of biological role, forms an intersubunit bridge (bridge B4) with the 23S rRNA of the 50S subunit in the ribosome. The sequence is that of Small ribosomal subunit protein uS15 from Chloroflexus aggregans (strain MD-66 / DSM 9485).